A 529-amino-acid chain; its full sequence is Peptide chain release factor 3 (529 aa).

In terms of domain architecture, tr-type G spans 11 to 280 (AKRRTFAIIS…GLVAWAPAPM (270 aa)). GTP is bound by residues 20–27 (SHPDAGKT), 88–92 (DTPGH), and 142–145 (NKLD).

This sequence belongs to the TRAFAC class translation factor GTPase superfamily. Classic translation factor GTPase family. PrfC subfamily.

The protein resides in the cytoplasm. In terms of biological role, increases the formation of ribosomal termination complexes and stimulates activities of RF-1 and RF-2. It binds guanine nucleotides and has strong preference for UGA stop codons. It may interact directly with the ribosome. The stimulation of RF-1 and RF-2 is significantly reduced by GTP and GDP, but not by GMP. This Salmonella gallinarum (strain 287/91 / NCTC 13346) protein is Peptide chain release factor 3.